Here is an 851-residue protein sequence, read N- to C-terminus: Transcriptional regulator RFX1 (851 aa).

Composition is skewed to polar residues over residues 1 to 11 (MSSDQTPQNRN) and 20 to 34 (PRLQQQTSQIPSTGP). Disordered regions lie at residues 1–121 (MSSD…EPHP), 134–170 (QSQFQFDYSSPYIGQSQSQSQSQSQAQPQPHPQPQTY), and 195–230 (HEASSADNDSATNITTPQKRKKQKRSESVTPNTGEN). Positions 38-53 (QQRERSQEQESDHEHQ) are enriched in basic and acidic residues. Over residues 54-84 (QAQQHLHQFQQSNLTPSTTAFPSSTSIPTFS) the composition is skewed to low complexity. Polar residues predominate over residues 85–114 (KQDQGYHNQFSSPQSSYRKIGNFAQSSNAP). Low complexity predominate over residues 141 to 170 (YSSPYIGQSQSQSQSQSQAQPQPHPQPQTY). The span at 199–211 (SADNDSATNITTP) shows a compositional bias: polar residues. A DNA-binding region (RFX-type winged-helix) is located at residues 282–357 (GMVWLLNSCD…YHYCGIKLTG (76 aa)). Disordered stretches follow at residues 368-411 (YQQK…SVSY) and 783-806 (PPSLSSLPQTQQQNPVIQEETGTQ). Residues 384 to 393 (AQVGSSTSSA) are compositionally biased toward polar residues. Positions 783 to 797 (PPSLSSLPQTQQQNP) are enriched in low complexity.

This sequence belongs to the RFX family.

It localises to the nucleus. Transcription factor involved in DNA damage responses, morphogenesis, and virulence. This chain is Transcriptional regulator RFX1 (RFX1), found in Candida albicans (strain SC5314 / ATCC MYA-2876) (Yeast).